The primary structure comprises 310 residues: Calbindin-32 (310 aa).

6 consecutive EF-hand domains span residues 35 to 70, 84 to 120, 131 to 166, 177 to 212, 224 to 259, and 283 to 304; these read LSANQFMDVWAHYDKDGNGYIEGTELDGFLREFVSS, TMLEELKSCFMEAYDDNQDGKIDIRELAQLLPMEENF, ESSVEFMKIWREYDTDNSGYIEADELKNFLRDLLKE, KLIEYTDTMLQVFDANKDGRLQLSEMAKLLPVKENF, LTKEDIEKVFSLYDRDNSGTIENEELKGFLKDLLEL, and TDKHGKISRKELTMILLTLAKI. Residues Asp-48, Asp-50, Asn-52, Tyr-54, Glu-59, Asp-98, Asn-100, Asp-102, Lys-104, Glu-109, Asp-144, Asp-146, Ser-148, Tyr-150, Glu-155, Asp-190, Asn-192, Asp-194, Arg-196, Glu-201, Asp-237, Asp-239, Ser-241, Thr-243, and Glu-248 each contribute to the Ca(2+) site.

This sequence belongs to the calbindin family. As to expression, expressed in a large number of neuron of the brain and the thoracic ganglion as well as in two small muscles of the thorax.

The sequence is that of Calbindin-32 (Cbp53E) from Drosophila melanogaster (Fruit fly).